Here is a 51-residue protein sequence, read N- to C-terminus: Large ribosomal subunit protein eL39 (51 aa).

Belongs to the eukaryotic ribosomal protein eL39 family.

This is Large ribosomal subunit protein eL39 from Methanosarcina barkeri (strain Fusaro / DSM 804).